Reading from the N-terminus, the 187-residue chain is Large ribosomal subunit protein bL9 (187 aa).

The disordered stretch occupies residues 155-187 (AQRGGMVTGLREEDEEEEVEETATEEGGEETAA). Residues 166–187 (EEDEEEEVEETATEEGGEETAA) show a composition bias toward acidic residues.

The protein belongs to the bacterial ribosomal protein bL9 family.

Functionally, binds to the 23S rRNA. This is Large ribosomal subunit protein bL9 from Rhodospirillum centenum (strain ATCC 51521 / SW).